A 129-amino-acid polypeptide reads, in one-letter code: Lysozyme C-3 (129 aa).

In terms of domain architecture, C-type lysozyme spans 1 to 129; the sequence is KVYERCELAA…VSRWIRGCRL (129 aa). 4 disulfides stabilise this stretch: Cys6/Cys127, Cys30/Cys115, Cys64/Cys80, and Cys76/Cys94. Catalysis depends on residues Glu35 and Asp52.

The protein belongs to the glycosyl hydrolase 22 family.

It localises to the secreted. The enzyme catalyses Hydrolysis of (1-&gt;4)-beta-linkages between N-acetylmuramic acid and N-acetyl-D-glucosamine residues in a peptidoglycan and between N-acetyl-D-glucosamine residues in chitodextrins.. In terms of biological role, lysozymes have primarily a bacteriolytic function; those in tissues and body fluids are associated with the monocyte-macrophage system and enhance the activity of immunoagents. The sequence is that of Lysozyme C-3 from Anas platyrhynchos (Mallard).